A 104-amino-acid chain; its full sequence is MFVVTNRITVKKGFAEKMAPRFTKGGKIEALQGFHKIEVWKVTRDHENEDMYVNTWWETEKDFEAWTKSDAFKEAHQNRDKTSSESSPVISSEIVKATVLSTLN.

The ABM domain occupies 2 to 94 (FVVTNRITVK…ESSPVISSEI (93 aa)). Asparagine 6 contacts Fe cation. Position 76 (histidine 76) interacts with heme.

It belongs to the antibiotic biosynthesis monooxygenase family. Heme-degrading monooxygenase IsdG subfamily. Homodimer.

It localises to the cytoplasm. It carries out the reaction heme b + 5 AH2 + 4 O2 + 2 H(+) = delta-staphylobilin + Fe(2+) + formaldehyde + 5 A + 4 H2O. The catalysed reaction is heme b + 5 AH2 + 4 O2 + 2 H(+) = beta-staphylobilin + Fe(2+) + formaldehyde + 5 A + 4 H2O. Functionally, allows bacterial pathogens to use the host heme as an iron source. Catalyzes the oxidative degradation of the heme macrocyclic porphyrin ring to the oxo-bilirubin chromophore staphylobilin (a mixture of the linear tetrapyrroles 5-oxo-delta-bilirubin and 15-oxo-beta-bilirubin) in the presence of a suitable electron donor such as ascorbate or NADPH--cytochrome P450 reductase, with subsequent release of free iron. The protein is Heme oxygenase (staphylobilin-producing) (isdG) of Staphylococcus haemolyticus (strain JCSC1435).